A 728-amino-acid polypeptide reads, in one-letter code: Polyribonucleotide nucleotidyltransferase (728 aa).

2 residues coordinate Mg(2+): Asp-489 and Asp-495. Positions 556–615 constitute a KH domain; the sequence is PKIDTIKIDVDKIKIVIGKGGETIDKIIAETGVKIDIDEEGNVSIYSSDQDAINRAKEII. Residues 625–693 form the S1 motif domain; that stretch reads DEVYHAKVVR…AKGRVDASMK (69 aa). The disordered stretch occupies residues 691 to 728; sequence SMKALLPRPPKPEKSDKHHDKGHPHKKHEEAPLTQTEE. A compositionally biased stretch (basic and acidic residues) spans 700-709; sequence PKPEKSDKHH.

This sequence belongs to the polyribonucleotide nucleotidyltransferase family. Requires Mg(2+) as cofactor.

It localises to the cytoplasm. It catalyses the reaction RNA(n+1) + phosphate = RNA(n) + a ribonucleoside 5'-diphosphate. Involved in mRNA degradation. Catalyzes the phosphorolysis of single-stranded polyribonucleotides processively in the 3'- to 5'-direction. The polypeptide is Polyribonucleotide nucleotidyltransferase (Streptococcus gordonii (strain Challis / ATCC 35105 / BCRC 15272 / CH1 / DL1 / V288)).